A 193-amino-acid polypeptide reads, in one-letter code: MVATGSLSSKNPASISELLDHGFYPGSLLNDFDYWDYVVPEPNLNEVVFEETTCQSLVKMLENCLSKSKHTKLGCSRVLVPEKLTQRIAQDVLRLSSTEPCGLRGCVMHVNLEIENVCKKLDRIVCDSSVVPTFELTLVFKQENCSWTSFRDFFFSRGRFSSGLRRTLILSSGFRLVKKKLYSLIGTTVIEEC.

This sequence belongs to the DDIT4 family.

Its subcellular location is the cytoplasm. Functionally, inhibits cell growth by regulating the TOR signaling pathway upstream of the TSC1-TSC2 complex and downstream of AKT1. This is DNA damage-inducible transcript 4-like protein (DDIT4L) from Bos taurus (Bovine).